We begin with the raw amino-acid sequence, 282 residues long: Probable endonuclease LCL3 (282 aa).

The chain crosses the membrane as a helical span at residues 55–71 (SNLIPTVLLTSGILFAV). The 162-residue stretch at 95 to 256 (RSILGKVTSV…KKKGKGLWKA (162 aa)) folds into the TNase-like domain. Arg144 is a catalytic residue. Asp149 provides a ligand contact to Ca(2+). Catalysis depends on residues Glu152 and Arg192.

Belongs to the LCL3 family.

The protein resides in the mitochondrion. The protein localises to the membrane. The protein is Probable endonuclease LCL3 (LCL3) of Arthroderma otae (strain ATCC MYA-4605 / CBS 113480) (Microsporum canis).